A 100-amino-acid chain; its full sequence is Urease subunit gamma (100 aa).

The protein belongs to the urease gamma subunit family. Heterotrimer of UreA (gamma), UreB (beta) and UreC (alpha) subunits. Three heterotrimers associate to form the active enzyme.

Its subcellular location is the cytoplasm. It catalyses the reaction urea + 2 H2O + H(+) = hydrogencarbonate + 2 NH4(+). It participates in nitrogen metabolism; urea degradation; CO(2) and NH(3) from urea (urease route): step 1/1. The sequence is that of Urease subunit gamma from Prochlorococcus marinus (strain MIT 9303).